Here is a 523-residue protein sequence, read N- to C-terminus: Cytochrome P450 52A3-A (523 aa).

A helical transmembrane segment spans residues 17 to 34 (WYTILFGAAVTYFLSIAL). Heme is bound at residue C471.

It belongs to the cytochrome P450 family. The cofactor is heme.

The protein localises to the membrane. Together with an NADPH cytochrome P450 the enzyme system catalyzes the terminal hydroxylation as the first step in the assimilation of alkanes and fatty acids. This is Cytochrome P450 52A3-A (CYP52A3-A) from Candida maltosa (Yeast).